Reading from the N-terminus, the 354-residue chain is 3-isopropylmalate dehydrogenase (354 aa).

Position 76–87 (76–87 (GPRWDSAKERPE)) interacts with NAD(+). Substrate is bound by residues Arg94, Arg104, Arg130, and Asp215. Asp215, Asp239, and Asp243 together coordinate Mg(2+). 273–285 (GSAPDIAGKNKAN) contributes to the NAD(+) binding site.

It belongs to the isocitrate and isopropylmalate dehydrogenases family. LeuB type 1 subfamily. Homodimer. The cofactor is Mg(2+). Mn(2+) serves as cofactor.

Its subcellular location is the cytoplasm. It catalyses the reaction (2R,3S)-3-isopropylmalate + NAD(+) = 4-methyl-2-oxopentanoate + CO2 + NADH. Its pathway is amino-acid biosynthesis; L-leucine biosynthesis; L-leucine from 3-methyl-2-oxobutanoate: step 3/4. In terms of biological role, catalyzes the oxidation of 3-carboxy-2-hydroxy-4-methylpentanoate (3-isopropylmalate) to 3-carboxy-4-methyl-2-oxopentanoate. The product decarboxylates to 4-methyl-2 oxopentanoate. This Bacillus cereus (strain ATCC 10987 / NRS 248) protein is 3-isopropylmalate dehydrogenase.